The following is a 123-amino-acid chain: MLHTANPVIKHKAGLLNLAEELSNVSKACKIMGVSRDTFYRYRELVAEGGVDAQINRSRRAPNLKNRTDEATEQAVVDYAVAFPTHGQHRASNELRKQGGFISDSGVRSVWLLHNLENLKRRY.

This is an uncharacterized protein from Shigella boydii serotype 4 (strain Sb227).